The primary structure comprises 454 residues: CBL-interacting protein kinase 17 (454 aa).

The Protein kinase domain maps to 13 to 268 (YEMGRTLGEG…MAGIKSHEWF (256 aa)). Residues 19–27 (LGEGNFGKV) and Lys-42 each bind ATP. The active-site Proton acceptor is Asp-136. The interval 154–183 (DFGLSALPQHLGNDGLLHTTCGSPNYIAPE) is activation loop. Positions 304-328 (KNSHQINAFQLIGMASSLDLSGFFE) constitute an NAF domain. Positions 334 to 363 (QRRIRFTSTHPPKDAFDKIESSATELGFQV) are PPI.

It belongs to the protein kinase superfamily. CAMK Ser/Thr protein kinase family. SNF1 subfamily. Requires Mn(2+) as cofactor.

The enzyme catalyses L-seryl-[protein] + ATP = O-phospho-L-seryl-[protein] + ADP + H(+). It catalyses the reaction L-threonyl-[protein] + ATP = O-phospho-L-threonyl-[protein] + ADP + H(+). Functionally, CIPK serine-threonine protein kinases interact with CBL proteins. Binding of a CBL protein to the regulatory NAF domain of CIPK protein lead to the activation of the kinase in a calcium-dependent manner. This chain is CBL-interacting protein kinase 17 (CIPK17), found in Oryza sativa subsp. japonica (Rice).